Here is a 377-residue protein sequence, read N- to C-terminus: 1-deoxy-D-xylulose 5-phosphate reductoisomerase (377 aa).

Threonine 20, glycine 21, isoleucine 23, asparagine 46, and asparagine 115 together coordinate NADPH. Lysine 116 is a binding site for 1-deoxy-D-xylulose 5-phosphate. Glutamate 117 contacts NADPH. Residue aspartate 141 coordinates Mn(2+). 1-deoxy-D-xylulose 5-phosphate is bound by residues serine 142, glutamate 143, serine 166, and histidine 189. Glutamate 143 lines the Mn(2+) pocket. Residue glycine 195 participates in NADPH binding. 1-deoxy-D-xylulose 5-phosphate contacts are provided by serine 202, asparagine 207, lysine 208, and glutamate 211. Glutamate 211 is a binding site for Mn(2+).

It belongs to the DXR family. It depends on Mg(2+) as a cofactor. Mn(2+) is required as a cofactor.

It catalyses the reaction 2-C-methyl-D-erythritol 4-phosphate + NADP(+) = 1-deoxy-D-xylulose 5-phosphate + NADPH + H(+). It functions in the pathway isoprenoid biosynthesis; isopentenyl diphosphate biosynthesis via DXP pathway; isopentenyl diphosphate from 1-deoxy-D-xylulose 5-phosphate: step 1/6. Functionally, catalyzes the NADPH-dependent rearrangement and reduction of 1-deoxy-D-xylulose-5-phosphate (DXP) to 2-C-methyl-D-erythritol 4-phosphate (MEP). The protein is 1-deoxy-D-xylulose 5-phosphate reductoisomerase of Malacoplasma penetrans (strain HF-2) (Mycoplasma penetrans).